The following is a 115-amino-acid chain: Ribonuclease P protein component (115 aa).

This sequence belongs to the RnpA family. In terms of assembly, consists of a catalytic RNA component (M1 or rnpB) and a protein subunit.

The catalysed reaction is Endonucleolytic cleavage of RNA, removing 5'-extranucleotides from tRNA precursor.. RNaseP catalyzes the removal of the 5'-leader sequence from pre-tRNA to produce the mature 5'-terminus. It can also cleave other RNA substrates such as 4.5S RNA. The protein component plays an auxiliary but essential role in vivo by binding to the 5'-leader sequence and broadening the substrate specificity of the ribozyme. This chain is Ribonuclease P protein component, found in Buchnera aphidicola subsp. Acyrthosiphon pisum (strain APS) (Acyrthosiphon pisum symbiotic bacterium).